The primary structure comprises 265 residues: Hydroxyethylthiazole kinase (265 aa).

Methionine 43 contributes to the substrate binding site. 2 residues coordinate ATP: lysine 118 and threonine 165. Glycine 192 contacts substrate.

Belongs to the Thz kinase family. Mg(2+) serves as cofactor.

The catalysed reaction is 5-(2-hydroxyethyl)-4-methylthiazole + ATP = 4-methyl-5-(2-phosphooxyethyl)-thiazole + ADP + H(+). The protein operates within cofactor biosynthesis; thiamine diphosphate biosynthesis; 4-methyl-5-(2-phosphoethyl)-thiazole from 5-(2-hydroxyethyl)-4-methylthiazole: step 1/1. Its function is as follows. Catalyzes the phosphorylation of the hydroxyl group of 4-methyl-5-beta-hydroxyethylthiazole (THZ). The protein is Hydroxyethylthiazole kinase of Pyrococcus furiosus (strain ATCC 43587 / DSM 3638 / JCM 8422 / Vc1).